A 3640-amino-acid polypeptide reads, in one-letter code: Serine/threonine-protein kinase SMG1 (3640 aa).

Positions 21–34 (NDWQPRSDSLSASQ) are enriched in polar residues. The segment at 21-41 (NDWQPRSDSLSASQDGVKCSV) is disordered. An FAT domain is found at 1495-1843 (YCHSGKCELA…LYPAIVGSIS (349 aa)). Residues 1794–1829 (APWRGIIPQLFSRLNHPEAYIRQSICSLLCRVAQDS) form an HEAT repeat. The interval 1870–1890 (GLCGGESETGSGPTSQESSRG) is disordered. Over residues 1874-1887 (GESETGSGPTSQES) the composition is skewed to low complexity. The 340-residue stretch at 2102-2441 (VGNTITILPT…MERDITRSLF (340 aa)) folds into the PI3K/PI4K catalytic domain. The G-loop stretch occupies residues 2108–2114 (ILPTKTK). Residues 2310–2318 (GLGDRHLDN) form a catalytic loop region. An activation loop region spans residues 2330–2354 (HIDYNVCFEKGKSLRVPEKVPFRMT). One can recognise an FATC domain in the interval 3608–3640 (RRMSVTEQVDYVIKEATNVDNLAQLYEGWTAWV).

Belongs to the PI3/PI4-kinase family. It depends on Mn(2+) as a cofactor. Autophosphorylated.

Its subcellular location is the nucleus. The protein resides in the cytoplasm. The enzyme catalyses L-seryl-[protein] + ATP = O-phospho-L-seryl-[protein] + ADP + H(+). It catalyses the reaction L-threonyl-[protein] + ATP = O-phospho-L-threonyl-[protein] + ADP + H(+). In terms of biological role, serine/threonine protein kinase involved in both mRNA surveillance and genotoxic stress response pathways. Recognizes the substrate consensus sequence [ST]-Q. Plays a central role in nonsense-mediated decay (NMD) of mRNAs containing premature stop codons by phosphorylating UPF1/RENT1. The polypeptide is Serine/threonine-protein kinase SMG1 (Danio rerio (Zebrafish)).